A 1780-amino-acid polypeptide reads, in one-letter code: Callose synthase 12 (1780 aa).

Topologically, residues 1 to 302 (MSLRHRTVPP…ERRTFFYLYR (302 aa)) are cytoplasmic. The helical transmembrane segment at 303 to 323 (SFDRLWVMLALFLQAAIIVAW) threads the bilayer. Topologically, residues 324-348 (EEKPDTSSVTRQLWNALKARDVQVR) are extracellular. The chain crosses the membrane as a helical span at residues 349–369 (LLTVFLTWSGMRLLQAVLDAA). Residues 370-386 (SQYPLVSRETKRHFFRM) lie on the Cytoplasmic side of the membrane. The chain crosses the membrane as a helical span at residues 387-407 (LMKVIAAAVWIVAFTVLYTNI). The Extracellular segment spans residues 408–427 (WKQKRQDRQWSNAATTKIYQ). A helical transmembrane segment spans residues 428–448 (FLYAVGAFLVPEILALALFII). Topologically, residues 449–489 (PWMRNFLEETNWKIFFALTWWFQGKSFVGRGLREGLVDNIK) are cytoplasmic. The helical transmembrane segment at 490 to 510 (YSTFWIFVLATKFTFSYFLQV) threads the bilayer. The Extracellular portion of the chain corresponds to 511-542 (KPMIKPSKLLWNLKDVDYEWHQFYGDSNRFSV). A helical membrane pass occupies residues 543-563 (ALLWLPVVLIYLMDIQIWYAI). Over 564 to 1348 (YSSIVGAVVG…FFRMLSFFYT (785 aa)) the chain is Cytoplasmic. A helical membrane pass occupies residues 1349 to 1369 (TVGFFFNTMMVILTVYAFLWG). Residues 1370 to 1394 (RVYLALSGVEKSALADSTDTNAALG) lie on the Extracellular side of the membrane. Residues 1395–1415 (VILNQQFIIQLGLFTALPMIV) traverse the membrane as a helical segment. Residues 1416–1421 (EWSLEE) lie on the Cytoplasmic side of the membrane. The helical transmembrane segment at 1422–1442 (GFLLAIWNFIRMQIQLSAVFY) threads the bilayer. Residues 1443 to 1489 (TFSMGTRAHYFGRTILHGGAKYRATGRGFVVEHKGFTENYRLYARSH) lie on the Extracellular side of the membrane. Residues 1490-1510 (FVKAIELGLILIVYASHSPIA) traverse the membrane as a helical segment. Residues 1511–1516 (KDSLIY) are Cytoplasmic-facing. Residues 1517–1537 (IAMTITSWFLVISWIMAPFVF) traverse the membrane as a helical segment. The Extracellular portion of the chain corresponds to 1538 to 1588 (NPSGFDWLKTVYDFEDFMNWIWYQGRISTKSEQSWEKWWYEEQDHLRNTGK). The helical transmembrane segment at 1589-1609 (AGLFVEIILVLRFFFFQYGIV) threads the bilayer. The Cytoplasmic segment spans residues 1610-1620 (YQLKIANGSTS). The chain crosses the membrane as a helical span at residues 1621–1641 (LFVYLFSWIYIFAIFVLFLVI). The Extracellular portion of the chain corresponds to 1642 to 1657 (QYARDKYSAKAHIRYR). The helical transmembrane segment at 1658-1678 (LVQFLLIVLAILVIVALLEFT) threads the bilayer. Topologically, residues 1679-1681 (HFS) are cytoplasmic. Residues 1682–1702 (FIDIFTSLLAFIPTGWGILLI) traverse the membrane as a helical segment. Residues 1703–1728 (AQTQRKWLKNYTIFWNAVVSVARMYD) lie on the Extracellular side of the membrane. An N-linked (GlcNAc...) asparagine glycan is attached at N1712. The chain crosses the membrane as a helical span at residues 1729 to 1749 (ILFGILIMVPVAFLSWMPGFQ). Over 1750-1780 (SMQTRILFNEAFSRGLRIMQIVTGKKSKGDV) the chain is Cytoplasmic.

Belongs to the glycosyltransferase 48 family. Highly expressed in flowers. Expressed at low levels in roots, leaves, stems, cauline leaves and siliques.

Its subcellular location is the cell membrane. The catalysed reaction is [(1-&gt;3)-beta-D-glucosyl](n) + UDP-alpha-D-glucose = [(1-&gt;3)-beta-D-glucosyl](n+1) + UDP + H(+). Its function is as follows. Involved in sporophytic and gametophytic development. Required for normal leaf development. During pollen formation, required for the formation of the callose wall separating the tetraspores of the tetrad (interstitial wall), but not for the callose wall surrounding the pollen mother cells (peripheral wall). Functionally redudant to CALS11 (GSL1). May play a role later in pollen grain maturation. Required for callose formation induced by wounding and pathogen attack. May interfere with salicylic acid-induced signaling pathway during defense response. During plant growth and development, callose is found as a transitory component of the cell plate in dividing cells, is a major component of pollen mother cell walls and pollen tubes, and is found as a structural component of plasmodesmatal canals. The sequence is that of Callose synthase 12 (CALS12) from Arabidopsis thaliana (Mouse-ear cress).